Here is a 426-residue protein sequence, read N- to C-terminus: Serine hydroxymethyltransferase (426 aa).

Residues leucine 113 and 117-119 each bind (6S)-5,6,7,8-tetrahydrofolate; that span reads GHL. Lysine 222 carries the post-translational modification N6-(pyridoxal phosphate)lysine. 363 to 365 is a binding site for (6S)-5,6,7,8-tetrahydrofolate; it reads SAF.

This sequence belongs to the SHMT family. In terms of assembly, homodimer. Requires pyridoxal 5'-phosphate as cofactor.

It localises to the cytoplasm. It catalyses the reaction (6R)-5,10-methylene-5,6,7,8-tetrahydrofolate + glycine + H2O = (6S)-5,6,7,8-tetrahydrofolate + L-serine. Its pathway is one-carbon metabolism; tetrahydrofolate interconversion. It participates in amino-acid biosynthesis; glycine biosynthesis; glycine from L-serine: step 1/1. Functionally, catalyzes the reversible interconversion of serine and glycine with tetrahydrofolate (THF) serving as the one-carbon carrier. This reaction serves as the major source of one-carbon groups required for the biosynthesis of purines, thymidylate, methionine, and other important biomolecules. Also exhibits THF-independent aldolase activity toward beta-hydroxyamino acids, producing glycine and aldehydes, via a retro-aldol mechanism. The chain is Serine hydroxymethyltransferase from Bacteroides thetaiotaomicron (strain ATCC 29148 / DSM 2079 / JCM 5827 / CCUG 10774 / NCTC 10582 / VPI-5482 / E50).